The primary structure comprises 295 residues: Tyrosine recombinase XerC (295 aa).

Residues 1 to 85 form the Core-binding (CB) domain; that stretch reads MQNALQKYYD…ALRQFLAYLV (85 aa). Residues 106–285 form the Tyr recombinase domain; the sequence is YLPKNIDQEQ…DFKHLTDVYD (180 aa). Active-site residues include Arg145, Lys169, His237, Arg240, and His263. Tyr272 serves as the catalytic O-(3'-phospho-DNA)-tyrosine intermediate.

It belongs to the 'phage' integrase family. XerC subfamily. As to quaternary structure, forms a cyclic heterotetrameric complex composed of two molecules of XerC and two molecules of XerD.

It is found in the cytoplasm. Functionally, site-specific tyrosine recombinase, which acts by catalyzing the cutting and rejoining of the recombining DNA molecules. The XerC-XerD complex is essential to convert dimers of the bacterial chromosome into monomers to permit their segregation at cell division. It also contributes to the segregational stability of plasmids. This is Tyrosine recombinase XerC from Actinobacillus succinogenes (strain ATCC 55618 / DSM 22257 / CCUG 43843 / 130Z).